The following is a 228-amino-acid chain: Trichome differentiation protein GL1 (228 aa).

HTH myb-type domains follow at residues 11–63 (NQEY…MNYL) and 64–118 (SPNV…SKKL). 2 DNA-binding regions (H-T-H motif) span residues 39 to 63 (WNRI…MNYL) and 91 to 114 (WSLI…NTHL).

In terms of assembly, homodimer and heterodimer with MYB82. Interacts directly with GL3 and BHLH2. Part of a complex made of GL1, GL3 or BHLH2, and TTG1. Also interacts with BHLH2/EGL3/MYC146 and BHLH12/MYC1. Interacts with MYB82. Expressed in leaves, stems and flowers. Expressed in trichome cells and in leaf primordia.

Its subcellular location is the nucleus. Functionally, transcription activator, when associated with BHLH2/EGL3/MYC146 or BHLH12/MYC1. Involved in epidermal cell fate specification in leaves. Together with TTG1 and GL3, promotes trichome formation and endoreplication. Regulates the production of a signal that induces hair (trichome) precursor cells on leaf primordia to differentiate. Binds to the WER-binding sites (WBS) promoter regions and activates the transcription of target genes. This chain is Trichome differentiation protein GL1, found in Arabidopsis thaliana (Mouse-ear cress).